A 549-amino-acid chain; its full sequence is Alpha-amylase (549 aa).

A signal peptide spans 1–34 (MLTFHRIIRKGWMFLLAFLLTALLFCPTGQPAKA). D139, D196, A218, D220, D231, and D237 together coordinate Ca(2+). Na(+) is bound at residue D196. Na(+)-binding residues include D220, D231, D237, and L238. Position 239 (D239) interacts with Ca(2+). The active-site Nucleophile is D268. H272 is a binding site for Ca(2+). E298 serves as the catalytic Proton donor. G337, F339, S440, D441, and D464 together coordinate Ca(2+).

It belongs to the glycosyl hydrolase 13 family. Monomer. Requires Ca(2+) as cofactor. Na(+) is required as a cofactor.

The protein resides in the secreted. It catalyses the reaction Endohydrolysis of (1-&gt;4)-alpha-D-glucosidic linkages in polysaccharides containing three or more (1-&gt;4)-alpha-linked D-glucose units.. The sequence is that of Alpha-amylase (amyS) from Geobacillus stearothermophilus (Bacillus stearothermophilus).